A 352-amino-acid polypeptide reads, in one-letter code: C-C chemokine receptor type 5 (352 aa).

At 1-30 (MDYQVSSPIYDIDYGPSEPCRKIDVKQMGA) the chain is on the extracellular side. Position 3 is a sulfotyrosine (tyrosine 3). O-linked (GalNAc...) serine glycosylation is found at serine 6 and serine 7. Residues tyrosine 10 and tyrosine 14 each carry the sulfotyrosine modification. 2 disulfides stabilise this stretch: cysteine 20/cysteine 269 and cysteine 101/cysteine 178. A helical membrane pass occupies residues 31-58 (QLLPPLYSLVFLFGFVGNMLVVLILINC). At 59–68 (KRLKSMTDIY) the chain is on the cytoplasmic side. Residues 69 to 89 (LLNLAISDLLFLFTIPFWAHY) form a helical membrane-spanning segment. Over 90 to 102 (AAGQWDFGNTMCQ) the chain is Extracellular. The helical transmembrane segment at 103–124 (FLTALYFIGFFSGIFFIILLTI) threads the bilayer. The Cytoplasmic segment spans residues 125 to 141 (DRYLAIVHAVFALKART). The helical transmembrane segment at 142–166 (VTFGVVTSVITWVVAVFASLPGIIF) threads the bilayer. Over 167 to 198 (TRSQKEGYHYSCSPHFPFSQYRFWKNFETLKM) the chain is Extracellular. A helical transmembrane segment spans residues 199–218 (VILGLVLPLLVMVICYSGIL). Over 219 to 235 (KTLLRCRNEKKRHRAVR) the chain is Cytoplasmic. Residues 236–260 (LIFTIMIVYFLFWAPYNIVLLINTY) form a helical membrane-spanning segment. At 261-277 (PDFFGVNNCNSSNRLDQ) the chain is on the extracellular side. A helical membrane pass occupies residues 278-301 (AMQVTETLGMTHCCVNPIIYAFVG). The Cytoplasmic portion of the chain corresponds to 302–352 (EKFRNYLVIFFQKHIAKRFCKCCSIFQKEAPERANSVYTRSTGEQEISVGL). Residues cysteine 321, cysteine 323, and cysteine 324 are each lipidated (S-palmitoyl cysteine). Residues serine 337, serine 342, and serine 349 each carry the phosphoserine; by BARK1 modification.

This sequence belongs to the G-protein coupled receptor 1 family. In terms of assembly, interacts with PRAF2. Efficient ligand binding to CCL3/MIP-1alpha and CCL4/MIP-1beta requires sulfation, O-glycosylation and sialic acid modifications. Glycosylation on Ser-6 is required for efficient binding of CCL4. Interacts with GRK2. Interacts with ARRB1 and ARRB2. Interacts with CNIH4. Interacts with S100A4; this interaction stimulates T-lymphocyte chemotaxis. Post-translationally, sulfated on at least 2 of the N-terminal tyrosines. Sulfation is required for efficient binding of the chemokines, CCL3 and CCL4. Palmitoylation in the C-terminal is important for cell surface expression. In terms of processing, phosphorylation on serine residues in the C-terminal is stimulated by binding CC chemokines especially by APO-RANTES. Post-translationally, O-glycosylated, but not N-glycosylated. Ser-6 appears to be the major site even if Ser-7 may be also O-glycosylated. Also sialylated glycans present which contribute to chemokine binding. Ser-17 may also be glycosylated and, if so, with small moieties such as a T-antigen.

It is found in the cell membrane. Receptor for a number of inflammatory CC-chemokines including CCL3/MIP-1-alpha, CCL4/MIP-1-beta and RANTES and subsequently transduces a signal by increasing the intracellular calcium ion level. May play a role in the control of granulocytic lineage proliferation or differentiation. Participates in T-lymphocyte migration to the infection site by acting as a chemotactic receptor. This chain is C-C chemokine receptor type 5 (CCR5), found in Saimiri sciureus (Common squirrel monkey).